A 37-amino-acid chain; its full sequence is Esculentin-2A (37 aa).

A disulfide bond links cysteine 31 and cysteine 37.

The protein belongs to the frog skin active peptide (FSAP) family. Esculentin subfamily. As to expression, expressed by the skin glands.

It is found in the secreted. In terms of biological role, shows antibacterial activity against representative Gram-negative and Gram-positive bacterial species, and hemolytic activity. This chain is Esculentin-2A, found in Pelophylax lessonae (Pool frog).